A 478-amino-acid chain; its full sequence is ATP synthase subunit beta (478 aa).

Residue 158-165 participates in ATP binding; the sequence is GGAGVGKT.

This sequence belongs to the ATPase alpha/beta chains family. In terms of assembly, F-type ATPases have 2 components, CF(1) - the catalytic core - and CF(0) - the membrane proton channel. CF(1) has five subunits: alpha(3), beta(3), gamma(1), delta(1), epsilon(1). CF(0) has three main subunits: a(1), b(2) and c(9-12). The alpha and beta chains form an alternating ring which encloses part of the gamma chain. CF(1) is attached to CF(0) by a central stalk formed by the gamma and epsilon chains, while a peripheral stalk is formed by the delta and b chains.

It is found in the cell inner membrane. The enzyme catalyses ATP + H2O + 4 H(+)(in) = ADP + phosphate + 5 H(+)(out). In terms of biological role, produces ATP from ADP in the presence of a proton gradient across the membrane. The catalytic sites are hosted primarily by the beta subunits. The polypeptide is ATP synthase subunit beta (Rhizobium johnstonii (strain DSM 114642 / LMG 32736 / 3841) (Rhizobium leguminosarum bv. viciae)).